A 429-amino-acid chain; its full sequence is Adenylosuccinate synthetase (429 aa).

GTP contacts are provided by residues 12 to 18 (GDEGKGK) and 40 to 42 (GHT). The active-site Proton acceptor is aspartate 13. Residues aspartate 13 and glycine 40 each contribute to the Mg(2+) site. Residues 13-16 (DEGK), 38-41 (NAGH), threonine 128, arginine 142, glutamine 223, threonine 238, and arginine 302 contribute to the IMP site. Catalysis depends on histidine 41, which acts as the Proton donor. Residue 298 to 304 (VNTGRKR) participates in substrate binding. GTP is bound by residues arginine 304, 330-332 (KLD), and 412-414 (GVG).

Belongs to the adenylosuccinate synthetase family. As to quaternary structure, homodimer. Mg(2+) serves as cofactor.

It is found in the cytoplasm. It carries out the reaction IMP + L-aspartate + GTP = N(6)-(1,2-dicarboxyethyl)-AMP + GDP + phosphate + 2 H(+). It participates in purine metabolism; AMP biosynthesis via de novo pathway; AMP from IMP: step 1/2. Plays an important role in the de novo pathway of purine nucleotide biosynthesis. Catalyzes the first committed step in the biosynthesis of AMP from IMP. The chain is Adenylosuccinate synthetase from Corynebacterium efficiens (strain DSM 44549 / YS-314 / AJ 12310 / JCM 11189 / NBRC 100395).